The following is a 196-amino-acid chain: RNA pyrophosphohydrolase (196 aa).

The Nudix hydrolase domain maps to Gly-6–Lys-149. The Nudix box signature appears at Gly-38 to Gly-59.

The protein belongs to the Nudix hydrolase family. RppH subfamily. Requires a divalent metal cation as cofactor.

Functionally, accelerates the degradation of transcripts by removing pyrophosphate from the 5'-end of triphosphorylated RNA, leading to a more labile monophosphorylated state that can stimulate subsequent ribonuclease cleavage. The polypeptide is RNA pyrophosphohydrolase (Haemophilus influenzae (strain PittEE)).